The sequence spans 265 residues: SPbeta prophage-derived uncharacterized protein YomU (265 aa).

Residues lysine 238 to glutamate 265 are disordered. Polar residues predominate over residues aspartate 249–glutamate 265.

The polypeptide is SPbeta prophage-derived uncharacterized protein YomU (yomU) (Bacillus subtilis (strain 168)).